Here is a 104-residue protein sequence, read N- to C-terminus: Large ribosomal subunit protein uL24 (104 aa).

This sequence belongs to the universal ribosomal protein uL24 family. Part of the 50S ribosomal subunit.

Its function is as follows. One of two assembly initiator proteins, it binds directly to the 5'-end of the 23S rRNA, where it nucleates assembly of the 50S subunit. Functionally, one of the proteins that surrounds the polypeptide exit tunnel on the outside of the subunit. This chain is Large ribosomal subunit protein uL24, found in Shigella flexneri.